The chain runs to 313 residues: Endo-beta-N-acetylglucosaminidase H (313 aa).

Residues 1–42 (MFTPVRRRVRTAALALSAAAALVLGSTAASGASATPSPAPAP) constitute a signal peptide (or 44). Positions 51–307 (PTSVAYVEVN…SAFTRELYGS (257 aa)) constitute a GH18 domain. The active-site Proton donor is glutamate 174.

This sequence belongs to the glycosyl hydrolase 18 family.

It catalyses the reaction an N(4)-(oligosaccharide-(1-&gt;3)-[oligosaccharide-(1-&gt;6)]-beta-D-Man-(1-&gt;4)-beta-D-GlcNAc-(1-&gt;4)-alpha-D-GlcNAc)-L-asparaginyl-[protein] + H2O = an oligosaccharide-(1-&gt;3)-[oligosaccharide-(1-&gt;6)]-beta-D-Man-(1-&gt;4)-D-GlcNAc + N(4)-(N-acetyl-beta-D-glucosaminyl)-L-asparaginyl-[protein]. Cleaves asparagine-linked oligomannose and hybrid, but not complex, oligosaccharides from glycoproteins. This chain is Endo-beta-N-acetylglucosaminidase H, found in Streptomyces plicatus.